We begin with the raw amino-acid sequence, 282 residues long: Biotin synthase (282 aa).

Residues methionine 1–arginine 228 enclose the Radical SAM core domain. The [4Fe-4S] cluster site is built by cysteine 17, cysteine 21, and cysteine 24. The [2Fe-2S] cluster site is built by cysteine 61, cysteine 96, cysteine 154, and arginine 221.

Belongs to the radical SAM superfamily. Biotin synthase family. As to quaternary structure, homodimer. [4Fe-4S] cluster is required as a cofactor. Requires [2Fe-2S] cluster as cofactor.

The enzyme catalyses (4R,5S)-dethiobiotin + (sulfur carrier)-SH + 2 reduced [2Fe-2S]-[ferredoxin] + 2 S-adenosyl-L-methionine = (sulfur carrier)-H + biotin + 2 5'-deoxyadenosine + 2 L-methionine + 2 oxidized [2Fe-2S]-[ferredoxin]. It functions in the pathway cofactor biosynthesis; biotin biosynthesis; biotin from 7,8-diaminononanoate: step 2/2. Catalyzes the conversion of dethiobiotin (DTB) to biotin by the insertion of a sulfur atom into dethiobiotin via a radical-based mechanism. The protein is Biotin synthase of Helicobacter pylori (strain HPAG1).